Consider the following 401-residue polypeptide: Canavanine gamma-lyase (401 aa).

Lysine 214 is subject to N6-(pyridoxal phosphate)lysine.

This sequence belongs to the trans-sulfuration enzymes family. It depends on pyridoxal 5'-phosphate as a cofactor.

It catalyses the reaction L-canavanine + H2O = N-hydroxyguanidine + L-homoserine. Lyase involved in the degradation of canavanine, the delta-oxa-analog of arginine, allowing growth on canavanine as sole nitrogen and carbon source. Catalyzes the elimination of hydroxyguanidine from canavanine with a subsequent water addition to yield homoserine. In Rhizobium leguminosarum bv. trifolii (strain WSM2304), this protein is Canavanine gamma-lyase.